A 382-amino-acid polypeptide reads, in one-letter code: Pre-mRNA-splicing factor SLU7 (382 aa).

Residues 1–15 show a composition bias toward low complexity; it reads MNNNSRNNENRSTIN. The disordered stretch occupies residues 1–72; the sequence is MNNNSRNNEN…TAEGGEKSDY (72 aa). Positions 46–58 are enriched in basic and acidic residues; that stretch reads DTPKEQEGKKPGN. Ser120 is subject to Phosphoserine. The CCHC-type zinc-finger motif lies at 120–137; sequence SFCRNCGEAGHKEKDCME. The tract at residues 200 to 224 is interaction with PRP8; it reads KDKSQTDETLWDTDEEIELMKLELY. Thr212 is subject to Phosphothreonine. The segment at 362–382 is disordered; that stretch reads RKVDGTKQSEEQRNHLKDLYG.

Belongs to the SLU7 family. Belongs to the CWC complex (or CEF1-associated complex), a spliceosome sub-complex reminiscent of a late-stage spliceosome composed of the U2, U5 and U6 snRNAs and at least BUD13, BUD31, BRR2, CDC40, CEF1, CLF1, CUS1, CWC2, CWC15, CWC21, CWC22, CWC23, CWC24, CWC25, CWC27, ECM2, HSH155, IST3, ISY1, LEA1, MSL1, NTC20, PRP8, PRP9, PRP11, PRP19, PRP21, PRP22, PRP45, PRP46, SLU7, SMB1, SMD1, SMD2, SMD3, SMX2, SMX3, SNT309, SNU114, SPP2, SYF1, SYF2, RSE1 and YJU2. Interacts with BRR2, ECM2, PRP18 and PRP22. Post-translationally, N-glycosylated.

It localises to the nucleus. In terms of biological role, essential protein involved in the second catalytic step of pre-mRNA splicing. Involved in the selection of 3'-type splice sites; this selection could be done via a 3'-splice site-binding factor, PRP16. The protein is Pre-mRNA-splicing factor SLU7 (SLU7) of Saccharomyces cerevisiae (strain ATCC 204508 / S288c) (Baker's yeast).